The sequence spans 178 residues: Ribosome maturation factor RimP (178 aa).

The protein belongs to the RimP family.

Its subcellular location is the cytoplasm. Required for maturation of 30S ribosomal subunits. The sequence is that of Ribosome maturation factor RimP from Mycobacterium avium (strain 104).